A 79-amino-acid chain; its full sequence is Small ribosomal subunit protein uS17 (79 aa).

The protein belongs to the universal ribosomal protein uS17 family. As to quaternary structure, part of the 30S ribosomal subunit.

One of the primary rRNA binding proteins, it binds specifically to the 5'-end of 16S ribosomal RNA. The sequence is that of Small ribosomal subunit protein uS17 from Rhizobium etli (strain CIAT 652).